A 309-amino-acid chain; its full sequence is Taste receptor type 2 member 46 (309 aa).

A topological domain (extracellular) is located at residue methionine 1. Residues 2-22 (ITFLPITFSILIVVIFFIGNF) traverse the membrane as a helical segment. The Cytoplasmic portion of the chain corresponds to 23-46 (ANGFIALINSIEWVKRQKISFAGQ). Residues 47 to 67 (ILTALAVSRVGLLWVLSLHWY) form a helical membrane-spanning segment. At 68–86 (ATEFNLAFHSVEVRSTAYN) the chain is on the extracellular side. Residues 87–107 (VWVVTNHFSNWLSTSLSMFYL) form a helical membrane-spanning segment. At 108-126 (LRIATFSNLIFLHLNRRVK) the chain is on the cytoplasmic side. A helical transmembrane segment spans residues 127-147 (SVILVTLLGPLLFLVCQLFVM). Over 148 to 178 (NMNQIVRTKEYEGNMTWKIKLKSAMYLSNTT) the chain is Extracellular. Asparagine 161 and asparagine 176 each carry an N-linked (GlcNAc...) asparagine glycan. The chain crosses the membrane as a helical span at residues 179–199 (VAMLANFVPLTLTLISFLLLI). Over 200–229 (CSLCKHLKKMRVHGKGSQDPSTKVHTKALQ) the chain is Cytoplasmic. A helical transmembrane segment spans residues 230 to 250 (IVTSFLLVCAIYFLSIILSVW). The Extracellular segment spans residues 251-259 (NSGGLENKP). The chain crosses the membrane as a helical span at residues 260–280 (FFMFCQAIKFSYPSTHPFILI). The Cytoplasmic segment spans residues 281-309 (WGNKTLKQTFLSVLRNVRYWVKGQKPSSP).

The protein belongs to the G-protein coupled receptor T2R family.

It localises to the membrane. The protein localises to the cell projection. The protein resides in the cilium membrane. Receptor that may play a role in the perception of bitterness and is gustducin-linked. May play a role in sensing the chemical composition of the gastrointestinal content. The activity of this receptor may stimulate alpha gustducin, mediate PLC-beta-2 activation and lead to the gating of TRPM5. In airway epithelial cells, binding of bitter compounds increases the intracellular calcium ion concentration and stimulates ciliary beat frequency. This is Taste receptor type 2 member 46 (TAS2R46) from Papio hamadryas (Hamadryas baboon).